The chain runs to 106 residues: Large ribosomal subunit protein uL24 (106 aa).

The protein belongs to the universal ribosomal protein uL24 family. As to quaternary structure, part of the 50S ribosomal subunit.

One of two assembly initiator proteins, it binds directly to the 5'-end of the 23S rRNA, where it nucleates assembly of the 50S subunit. Functionally, one of the proteins that surrounds the polypeptide exit tunnel on the outside of the subunit. The protein is Large ribosomal subunit protein uL24 of Alkalilimnicola ehrlichii (strain ATCC BAA-1101 / DSM 17681 / MLHE-1).